A 309-amino-acid polypeptide reads, in one-letter code: Sulfate adenylyltransferase subunit 2 (309 aa).

It belongs to the PAPS reductase family. CysD subfamily. Heterodimer composed of CysD, the smaller subunit, and CysN.

It carries out the reaction sulfate + ATP + H(+) = adenosine 5'-phosphosulfate + diphosphate. It participates in sulfur metabolism; hydrogen sulfide biosynthesis; sulfite from sulfate: step 1/3. In terms of biological role, with CysN forms the ATP sulfurylase (ATPS) that catalyzes the adenylation of sulfate producing adenosine 5'-phosphosulfate (APS) and diphosphate, the first enzymatic step in sulfur assimilation pathway. APS synthesis involves the formation of a high-energy phosphoric-sulfuric acid anhydride bond driven by GTP hydrolysis by CysN coupled to ATP hydrolysis by CysD. The protein is Sulfate adenylyltransferase subunit 2 of Aeromonas salmonicida (strain A449).